A 146-amino-acid polypeptide reads, in one-letter code: Hemoglobin subunit beta (146 aa).

An N-acetylvaline modification is found at V1. Residues 2 to 146 (NLTAAEKTQV…VANALAHKYH (145 aa)) enclose the Globin domain. T12 bears the Phosphothreonine mark. An N6-acetyllysine modification is found at K59. H63 is a heme b binding site. The residue at position 82 (K82) is an N6-acetyllysine. H92 lines the heme b pocket. An S-nitrosocysteine modification is found at C93. N6-acetyllysine is present on K144.

This sequence belongs to the globin family. In terms of assembly, heterotetramer of two alpha chains and two beta chains. Red blood cells.

In terms of biological role, involved in oxygen transport from the lung to the various peripheral tissues. The polypeptide is Hemoglobin subunit beta (HBB) (Loxodonta africana (African elephant)).